Consider the following 1178-residue polypeptide: Pyruvate carboxylase, mitochondrial (1178 aa).

The transit peptide at 1-20 (MLKFQTVRGGLRLLGVRRSS) directs the protein to the mitochondrion. 2 positions are modified to N6-acetyllysine: K35 and K39. One can recognise a Biotin carboxylation domain in the interval 36 to 486 (PIKKVMVANR…DTQFIDENPE (451 aa)). K79 is modified (N6-acetyllysine; alternate). K79 is modified (N6-succinyllysine; alternate). N6-acetyllysine is present on residues K148 and K152. K152 and E236 together coordinate ATP. The 198-residue stretch at 156-353 (RAIAIAAGVP…LVHAQIHVSE (198 aa)) folds into the ATP-grasp domain. An N6-acetyllysine modification is found at K241. Residue H271 coordinates ATP. N6-acetyllysine is present on residues K297, K316, and K319. R328 is a catalytic residue. K434 carries the N6-acetyllysine modification. K442 carries the post-translational modification N6-succinyllysine. The 270-residue stretch at 563-832 (LLLMDTTFRD…DTEVPLERVF (270 aa)) folds into the Pyruvate carboxyltransferase domain. 571 to 575 (RDAHQ) provides a ligand contact to substrate. D572 contributes to the Mn(2+) binding site. At K589 the chain carries N6-acetyllysine. R644 is a binding site for substrate. N6-acetyllysine occurs at positions 661 and 717. K741 is a Mn(2+) binding site. K741 bears the N6-carboxylysine mark. K748 carries the N6-acetyllysine modification. Residues H771 and H773 each coordinate Mn(2+). The residue at position 892 (K892) is an N6-acetyllysine. Position 908 (T908) interacts with substrate. Position 969 is an N6-acetyllysine (K969). K988 is modified (N6-acetyllysine; alternate). K988 is subject to N6-succinyllysine; alternate. Position 992 is an N6-acetyllysine (K992). T1003 is subject to Phosphothreonine. 3 positions are modified to N6-acetyllysine: K1061, K1090, and K1124. Residues 1109-1178 (KGQIGAPMPG…EGDDLILEIE (70 aa)) form the Biotinyl-binding domain. N6-biotinyllysine is present on K1144.

Homotetramer. Interacts (via the biotin carboxylation domain) with SIRT4. Biotin serves as cofactor. It depends on Mn(2+) as a cofactor. In terms of processing, acetylation of Lys-748 might play a role in catalytic activity regulation.

The protein resides in the mitochondrion matrix. It carries out the reaction hydrogencarbonate + pyruvate + ATP = oxaloacetate + ADP + phosphate + H(+). It functions in the pathway carbohydrate biosynthesis; gluconeogenesis. Pyruvate carboxylase catalyzes a 2-step reaction, involving the ATP-dependent carboxylation of the covalently attached biotin in the first step and the transfer of the carboxyl group to pyruvate in the second. Catalyzes in a tissue specific manner, the initial reactions of glucose (liver, kidney) and lipid (adipose tissue, liver, brain) synthesis from pyruvate. This is Pyruvate carboxylase, mitochondrial (Pc) from Rattus norvegicus (Rat).